The sequence spans 440 residues: MKRLARSLYLQVLLAVVLGALVGHLFPATGASLKPLGDGFIKLVKMLIAPIVFATVVTGIAKMGDLRKVGRVGLKGLLYFEVLTTVALAIGLVVARLARPGAGMNVDPATLDTKAIASYTNGAQAHGTVDFLMNVIPRDVADAFARGDILQVLLFSVLFGAALAALKDKGRPVLEFVDGLSLVLFRIVGFVMRLAPVGAFGAMAFTVGKYGIATLLSLGKLIACFYATSALFVVLMLGLVLRWCGLSLFRFLRYIKEEIFVVLGTSSSESALPLMMRKMEKLGCSKPVVGLVVPMGYSFNLDGTSIYLTLATLFIAQATNTHVTLVQELEILAVLLLTSKGAAAVTGGGFITLAATLSAVGNIPVAGLALLLGVDRFMSEARAITNLIGNGVASVAVSRWEGELDQARARAVLAGTVPEEVEPANEPEPPAVPAGAGLHG.

A run of 8 helical transmembrane segments spans residues 8–28 (LYLQ…LFPA), 40–60 (FIKL…VTGI), 74–94 (LKGL…GLVV), 147–167 (GDIL…AALK), 187–207 (IVGF…AFTV), 221–241 (LIAC…GLVL), 288–308 (VVGL…SIYL), and 354–374 (AATL…LLGV). The tract at residues 419–440 (EEVEPANEPEPPAVPAGAGLHG) is disordered.

The protein belongs to the dicarboxylate/amino acid:cation symporter (DAACS) (TC 2.A.23) family.

Its subcellular location is the cell inner membrane. Functionally, responsible for the transport of dicarboxylates such as succinate, fumarate, and malate from the periplasm across the membrane. This Anaeromyxobacter dehalogenans (strain 2CP-1 / ATCC BAA-258) protein is C4-dicarboxylate transport protein.